Consider the following 473-residue polypeptide: Photosystem II CP43 reaction center protein (473 aa).

A propeptide spanning residues 1-14 (MKTLYSLRRFYHVE) is cleaved from the precursor. T15 carries the N-acetylthreonine modification. The residue at position 15 (T15) is a Phosphothreonine. A run of 5 helical transmembrane segments spans residues 69–93 (LFEV…PHLA), 134–155 (LLGP…KDRN), 178–200 (KALY…RKIT), 255–275 (KPFA…LSYS), and 291–312 (WFNN…ASQA). E367 is a binding site for [CaMn4O5] cluster. A helical membrane pass occupies residues 447–471 (RARAAAAGFEKGIDRDFEPVLSMTP).

It belongs to the PsbB/PsbC family. PsbC subfamily. PSII is composed of 1 copy each of membrane proteins PsbA, PsbB, PsbC, PsbD, PsbE, PsbF, PsbH, PsbI, PsbJ, PsbK, PsbL, PsbM, PsbT, PsbX, PsbY, PsbZ, Psb30/Ycf12, at least 3 peripheral proteins of the oxygen-evolving complex and a large number of cofactors. It forms dimeric complexes. The cofactor is Binds multiple chlorophylls and provides some of the ligands for the Ca-4Mn-5O cluster of the oxygen-evolving complex. It may also provide a ligand for a Cl- that is required for oxygen evolution. PSII binds additional chlorophylls, carotenoids and specific lipids..

It localises to the plastid. Its subcellular location is the chloroplast thylakoid membrane. One of the components of the core complex of photosystem II (PSII). It binds chlorophyll and helps catalyze the primary light-induced photochemical processes of PSII. PSII is a light-driven water:plastoquinone oxidoreductase, using light energy to abstract electrons from H(2)O, generating O(2) and a proton gradient subsequently used for ATP formation. This Ipomoea purpurea (Common morning glory) protein is Photosystem II CP43 reaction center protein.